A 134-amino-acid chain; its full sequence is Lymphocyte antigen 6F (134 aa).

A signal peptide spans 1-26 (MDSCHTTKSCVLILLVVLLCAERAQG). In terms of domain architecture, UPAR/Ly6 spans 27-119 (LECYNCLGVS…TGGSTWTMTR (93 aa)). 5 disulfides stabilise this stretch: cysteine 29/cysteine 53, cysteine 32/cysteine 41, cysteine 46/cysteine 74, cysteine 78/cysteine 98, and cysteine 99/cysteine 104. Glycine 112 carries the GPI-anchor amidated glycine lipid modification. A propeptide spans 113 to 134 (STWTMTRVLLLNLGSVFLQTLL) (removed in mature form).

The protein resides in the cell membrane. This Mus musculus (Mouse) protein is Lymphocyte antigen 6F (Ly6f).